The primary structure comprises 177 residues: ATP synthase subunit delta (177 aa).

It belongs to the ATPase delta chain family. In terms of assembly, F-type ATPases have 2 components, F(1) - the catalytic core - and F(0) - the membrane proton channel. F(1) has five subunits: alpha(3), beta(3), gamma(1), delta(1), epsilon(1). F(0) has three main subunits: a(1), b(2) and c(10-14). The alpha and beta chains form an alternating ring which encloses part of the gamma chain. F(1) is attached to F(0) by a central stalk formed by the gamma and epsilon chains, while a peripheral stalk is formed by the delta and b chains.

It localises to the cell inner membrane. F(1)F(0) ATP synthase produces ATP from ADP in the presence of a proton or sodium gradient. F-type ATPases consist of two structural domains, F(1) containing the extramembraneous catalytic core and F(0) containing the membrane proton channel, linked together by a central stalk and a peripheral stalk. During catalysis, ATP synthesis in the catalytic domain of F(1) is coupled via a rotary mechanism of the central stalk subunits to proton translocation. In terms of biological role, this protein is part of the stalk that links CF(0) to CF(1). It either transmits conformational changes from CF(0) to CF(1) or is implicated in proton conduction. The chain is ATP synthase subunit delta from Shewanella frigidimarina (strain NCIMB 400).